The chain runs to 218 residues: Sodium channel regulatory subunit beta-1 (218 aa).

An N-terminal signal peptide occupies residues 1-18 (MGTLLALVVGAVLVSSAW). Over 19–157 (GGCVEVDSET…DKANRDMASI (139 aa)) the chain is Extracellular. Disulfide bonds link Cys21-Cys43 and Cys40-Cys121. One can recognise an Ig-like C2-type domain in the interval 22–150 (VEVDSETEAV…KIHLEVVDKA (129 aa)). Residues Asn93, Asn110, Asn114, and Asn135 are each glycosylated (N-linked (GlcNAc...) asparagine). A helical membrane pass occupies residues 158–179 (VSEIMMYVLIVVLTIWLVAEMV). Topologically, residues 180–218 (YCYKKIAAATEAAAQENASEYLAITSESKENCTGVQVAE) are cytoplasmic.

This sequence belongs to the sodium channel auxiliary subunit SCN1B (TC 8.A.17) family. A voltage-gated sodium (Nav) channel consists of an ion-conducting pore-forming alpha subunit functional on its own that is regulated by one or more beta subunits. Interacts with SCN1A; regulatory subunit of SCN1A/Nav1.1. Interacts with SCN3A; regulatory subunit of SCN3A/Nav1.3. Interacts with SCN4A; regulatory subunit of SCN4A/Nav1.4. Interacts with SCN5A; regulatory subunit of SCN5A/Nav1.5. Interacts with SCN8A; regulatory subunit of SCN8A/Nav1.6. Interacts with SCN9A; regulatory subunit of SCN9A/Nav1.7. Interacts with SCN10A; regulatory subunit of SCN10A/Nav1.8. Interacts with NFASC. Interacts with TMEM65. In terms of tissue distribution, detected in brain (at protein level). Expressed in brain, heart, skeletal muscle and spinal cord.

Its subcellular location is the cell membrane. It is found in the perikaryon. The protein localises to the cell projection. It localises to the axon. In terms of biological role, regulatory subunit of multiple voltage-gated sodium (Nav) channels directly mediating the depolarization of excitable membranes. Navs, also called VGSCs (voltage-gated sodium channels) or VDSCs (voltage-dependent sodium channels), operate by switching between closed and open conformations depending on the voltage difference across the membrane. In the open conformation they allow Na(+) ions to selectively pass through the pore, along their electrochemical gradient. The influx of Na+ ions provokes membrane depolarization, initiating the propagation of electrical signals throughout cells and tissues. The accessory beta subunits participate in localization and functional modulation of the Nav channels. Modulates the activity of SCN1A/Nav1.1, SCN2A/Nav1.2, SCN3A/Nav1.3, SCN4A/Nav1.4, SCN5A/Nav1.5, SCN8A/Nav1.6, SCN9A/Nav1.7 and SCN10A/Nav1.8. The polypeptide is Sodium channel regulatory subunit beta-1 (Rattus norvegicus (Rat)).